The sequence spans 395 residues: Allantoicase (395 aa).

This sequence belongs to the allantoicase family.

It catalyses the reaction allantoate + H2O = (S)-ureidoglycolate + urea. It participates in nitrogen metabolism; (S)-allantoin degradation; (S)-ureidoglycolate from allantoate (aminidohydrolase route): step 1/1. Functionally, utilization of purines as secondary nitrogen sources, when primary sources are limiting. This is Allantoicase (allc) from Danio rerio (Zebrafish).